Here is a 1279-residue protein sequence, read N- to C-terminus: ATP-dependent helicase/nuclease subunit A (1279 aa).

One can recognise a UvrD-like helicase ATP-binding domain in the interval 4 to 499; the sequence is TKWTDEQRQA…VKLFKNFRSR (496 aa). Residue 25–32 coordinates ATP; that stretch reads AGAGAGKT. Residues 526-853 form the UvrD-like helicase C-terminal domain; sequence EEALKVGASY…RIMSIHKSKG (328 aa).

This sequence belongs to the helicase family. AddA subfamily. In terms of assembly, heterodimer of AddA and AddB/RexB. Mg(2+) is required as a cofactor.

It carries out the reaction Couples ATP hydrolysis with the unwinding of duplex DNA by translocating in the 3'-5' direction.. It catalyses the reaction ATP + H2O = ADP + phosphate + H(+). Its function is as follows. The heterodimer acts as both an ATP-dependent DNA helicase and an ATP-dependent, dual-direction single-stranded exonuclease. Recognizes the chi site generating a DNA molecule suitable for the initiation of homologous recombination. The AddA nuclease domain is required for chi fragment generation; this subunit has the helicase and 3' -&gt; 5' nuclease activities. This chain is ATP-dependent helicase/nuclease subunit A, found in Clostridium botulinum (strain Hall / ATCC 3502 / NCTC 13319 / Type A).